A 61-amino-acid polypeptide reads, in one-letter code: Type IV secretion system protein PtlI homolog (61 aa).

Residues 1-25 form the signal peptide; it reads MIHAHSNARLLRWAILAIAPVTLGA. The interval 37–61 is disordered; that stretch reads PDGKPLIPINTAAPEQGSSCQTRAP. Residues 52-61 show a composition bias toward polar residues; that stretch reads QGSSCQTRAP.

The polypeptide is Type IV secretion system protein PtlI homolog (ptlI) (Bordetella parapertussis (strain 12822 / ATCC BAA-587 / NCTC 13253)).